Reading from the N-terminus, the 275-residue chain is 2,3,4,5-tetrahydropyridine-2,6-dicarboxylate N-succinyltransferase (275 aa).

The protein belongs to the transferase hexapeptide repeat family.

The protein resides in the cytoplasm. The enzyme catalyses (S)-2,3,4,5-tetrahydrodipicolinate + succinyl-CoA + H2O = (S)-2-succinylamino-6-oxoheptanedioate + CoA. It participates in amino-acid biosynthesis; L-lysine biosynthesis via DAP pathway; LL-2,6-diaminopimelate from (S)-tetrahydrodipicolinate (succinylase route): step 1/3. The protein is 2,3,4,5-tetrahydropyridine-2,6-dicarboxylate N-succinyltransferase of Burkholderia multivorans (strain ATCC 17616 / 249).